Reading from the N-terminus, the 217-residue chain is Adenylate kinase (217 aa).

10–15 (GAGKGT) is an ATP binding site. The interval 30 to 59 (STGDMFRAAMKEETPLGLEAKSYIDKGELV) is NMP. Residues Thr31, Arg36, 57–59 (ELV), 85–88 (GFPR), and Gln92 each bind AMP. Positions 126–163 (GRRICSVCGTTYHLVFNPPKTPGVCDKDGGDLYQRADD) are LID. Arg127 lines the ATP pocket. Positions 130 and 133 each coordinate Zn(2+). An ATP-binding site is contributed by 136 to 137 (TY). Residues Cys150 and Asp153 each contribute to the Zn(2+) site. AMP is bound by residues Arg160 and Arg171. Residue Gln199 participates in ATP binding.

The protein belongs to the adenylate kinase family. In terms of assembly, monomer.

The protein localises to the cytoplasm. The enzyme catalyses AMP + ATP = 2 ADP. It functions in the pathway purine metabolism; AMP biosynthesis via salvage pathway; AMP from ADP: step 1/1. Functionally, catalyzes the reversible transfer of the terminal phosphate group between ATP and AMP. Plays an important role in cellular energy homeostasis and in adenine nucleotide metabolism. This is Adenylate kinase from Bacillus velezensis (strain DSM 23117 / BGSC 10A6 / LMG 26770 / FZB42) (Bacillus amyloliquefaciens subsp. plantarum).